The chain runs to 275 residues: Large ribosomal subunit protein uL2 (275 aa).

The interval Arg-221–Lys-275 is disordered. A compositionally biased stretch (basic residues) spans Lys-253–Arg-262.

This sequence belongs to the universal ribosomal protein uL2 family. In terms of assembly, part of the 50S ribosomal subunit. Forms a bridge to the 30S subunit in the 70S ribosome.

Its function is as follows. One of the primary rRNA binding proteins. Required for association of the 30S and 50S subunits to form the 70S ribosome, for tRNA binding and peptide bond formation. It has been suggested to have peptidyltransferase activity; this is somewhat controversial. Makes several contacts with the 16S rRNA in the 70S ribosome. The protein is Large ribosomal subunit protein uL2 of Wigglesworthia glossinidia brevipalpis.